We begin with the raw amino-acid sequence, 1213 residues long: DNA-directed RNA polymerase subunit beta' (1213 aa).

Positions 60, 62, 75, and 78 each coordinate Zn(2+). Asp-450, Asp-452, and Asp-454 together coordinate Mg(2+). Zn(2+) is bound by residues Cys-819, Cys-893, Cys-900, and Cys-903.

It belongs to the RNA polymerase beta' chain family. The RNAP catalytic core consists of 2 alpha, 1 beta, 1 beta' and 1 omega subunit. When a sigma factor is associated with the core the holoenzyme is formed, which can initiate transcription. The cofactor is Mg(2+). Zn(2+) is required as a cofactor.

It catalyses the reaction RNA(n) + a ribonucleoside 5'-triphosphate = RNA(n+1) + diphosphate. In terms of biological role, DNA-dependent RNA polymerase catalyzes the transcription of DNA into RNA using the four ribonucleoside triphosphates as substrates. In Streptococcus pyogenes serotype M2 (strain MGAS10270), this protein is DNA-directed RNA polymerase subunit beta'.